The following is a 362-amino-acid chain: Lipoprotein p35 (362 aa).

The signal sequence occupies residues 1–30 (MKIKKIKLLKALALTGAFGIVATVPVIVSS). Residue C31 is the site of N-palmitoyl cysteine attachment. Residue C31 is the site of S-diacylglycerol cysteine attachment. The interval 33-53 (STSENNGNGNGNGGTDGNTQQ) is disordered.

The protein belongs to the p35 lipoprotein family. In terms of processing, the N-terminus is blocked.

The protein localises to the cell membrane. Major M.penetrans antigen. The polypeptide is Lipoprotein p35 (Malacoplasma penetrans (strain HF-2) (Mycoplasma penetrans)).